A 34-amino-acid polypeptide reads, in one-letter code: Photosystem I reaction center subunit XII (34 aa).

A helical membrane pass occupies residues 10 to 32 (IFIALVVAAHAGVLAVRLCVSLY).

It belongs to the PsaM family.

It localises to the cellular thylakoid membrane. The sequence is that of Photosystem I reaction center subunit XII from Synechococcus sp. (strain WH7803).